We begin with the raw amino-acid sequence, 280 residues long: Ribonuclease Z (280 aa).

The Zn(2+) site is built by histidine 61, histidine 63, aspartate 65, histidine 66, histidine 153, aspartate 176, and histidine 240. The Proton acceptor role is filled by aspartate 65.

This sequence belongs to the RNase Z family. As to quaternary structure, homodimer. It depends on Zn(2+) as a cofactor.

The enzyme catalyses Endonucleolytic cleavage of RNA, removing extra 3' nucleotides from tRNA precursor, generating 3' termini of tRNAs. A 3'-hydroxy group is left at the tRNA terminus and a 5'-phosphoryl group is left at the trailer molecule.. In terms of biological role, zinc phosphodiesterase, which displays some tRNA 3'-processing endonuclease activity. Probably involved in tRNA maturation, by removing a 3'-trailer from precursor tRNA. The polypeptide is Ribonuclease Z (Mycobacterium bovis (strain BCG / Pasteur 1173P2)).